The chain runs to 301 residues: Phosphatidylglycerol--prolipoprotein diacylglyceryl transferase (301 aa).

Helical transmembrane passes span 17-37 (LAVR…IVVG), 59-79 (MLFY…VLFY), 97-117 (GGMS…LFAW), 129-149 (FVAP…FING), 203-223 (PSQL…LWLF), 230-250 (VGAA…TVEF), and 257-277 (FLGL…PMII). Arginine 142 is an a 1,2-diacyl-sn-glycero-3-phospho-(1'-sn-glycerol) binding site.

It belongs to the Lgt family.

The protein localises to the cell inner membrane. It catalyses the reaction L-cysteinyl-[prolipoprotein] + a 1,2-diacyl-sn-glycero-3-phospho-(1'-sn-glycerol) = an S-1,2-diacyl-sn-glyceryl-L-cysteinyl-[prolipoprotein] + sn-glycerol 1-phosphate + H(+). Its pathway is protein modification; lipoprotein biosynthesis (diacylglyceryl transfer). Catalyzes the transfer of the diacylglyceryl group from phosphatidylglycerol to the sulfhydryl group of the N-terminal cysteine of a prolipoprotein, the first step in the formation of mature lipoproteins. The polypeptide is Phosphatidylglycerol--prolipoprotein diacylglyceryl transferase (Paraburkholderia phymatum (strain DSM 17167 / CIP 108236 / LMG 21445 / STM815) (Burkholderia phymatum)).